Reading from the N-terminus, the 175-residue chain is Calcineurin subunit B (175 aa).

EF-hand domains follow at residues 21–56 (DEIE…SANP), 60–88 (RIME…FSGR), 90–125 (SKDE…MVGS), and 131–166 (QLQQ…TEVA). Ca(2+) is bound by residues Asp-34, Asp-36, Ser-38, Ser-40, Glu-45, Asp-66, Asp-68, Ser-70, Asp-72, Glu-77, Asp-103, Asp-105, Asp-107, Glu-114, Asp-144, Asp-146, Asp-148, Gln-150, and Glu-155.

The protein belongs to the calcineurin regulatory subunit family. In terms of assembly, composed of a catalytic subunit (A) and a regulatory subunit (B).

In terms of biological role, regulatory subunit of calcineurin, a calcium-dependent, calmodulin stimulated protein phosphatase. Confers calcium sensitivity. This is Calcineurin subunit B (CNB1) from Candida glabrata (strain ATCC 2001 / BCRC 20586 / JCM 3761 / NBRC 0622 / NRRL Y-65 / CBS 138) (Yeast).